We begin with the raw amino-acid sequence, 519 residues long: MIKPEARLHILYDISKELISSFPLDNLLKAAMNALVEHLRLRDGGIVIHGSGGEPWINVRAPIGDDVRSRSLTIEQADAINRVIASGEKHFGKNSVVLPVKVNRKAIGALWIDFAQKSGAQDESLLAMIAVLIGLTCQRDRELCSDGGSVAEEQQAGQIPKIKPKPHPTQLDKIDWIVGESPALKRVLATTKIVAATNSAVLLRGESGTGKECFARAIHALSIRKSKAFIKLNCAALSETVLESELFGHEKGAFTGALLQRAGRFELANGGTLLLDEIGDVSPQFQAKLLRVLQEGEFERLGGTKTLKVDVRVICATNKNLEVAVLRGEFRADLYYRINVVPIILPPLRQRDGDISLLAQVFLEQFNNANDRNCDFGPSAIDILSKCAFPGNVRELDNCVQRTATLASSNTITSSDFACQQDQCSSALLRKADGDGIGNDAMNGLNSRDTMSGGLCAHAGTPSGAAATIEAAGLTERDRLIKAMERAGWVQAKAARILGKTPRQVGYALRRHRIDVKKE.

Residues 177 to 405 enclose the Sigma-54 factor interaction domain; that stretch reads IVGESPALKR…LDNCVQRTAT (229 aa). ATP is bound by residues 205-212 and 268-277; these read GESGTGKE and ANGGTLLLDE. Residues 406-476 form an inter-domain linker region; the sequence is LASSNTITSS…ATIEAAGLTE (71 aa). A divalent metal cation contacts are provided by Cys-419 and Cys-424. The tract at residues 477–519 is C-terminal DNA-binding domain; that stretch reads RDRLIKAMERAGWVQAKAARILGKTPRQVGYALRRHRIDVKKE. Positions 491–510 form a DNA-binding region, H-T-H motif; it reads QAKAARILGKTPRQVGYALR.

In terms of assembly, interacts with sigma-54.

Functionally, required for activation of most nif operons, which are directly involved in nitrogen fixation. This is Nif-specific regulatory protein (nifA) from Rhizobium leguminosarum.